The primary structure comprises 523 residues: MDTSLFSLFVPILVFVFIALFKKSKKPKHVKAPAPSGAWPIIGHLHLLSGKEQLLYRTLGKMADQYGPAMSLRLGSSETFVVSSFEVAKDCFTVNDKALASRPITAAAKHMGYDCAVFGFAPYSAFWREMRKIATLELLSNRRLQMLKHVRVSEISMVMQDLYSLWVKKGGSEPVMVDLKSWLEDMSLNMMVRMVAGKRYFGGGSLSPEDAEEARQCRKGVANFFHLVGIFTVSDAFPKLGWFDFQGHEKEMKQTGRELDVILERWIENHRQQRKVSGTKHNDSDFVDVMLSLAEQGKFSHLQHDAITSIKSTCLALILGGSETSPSTLTWAISLLLNNKDMLKKAQDEIDIHVGRDRNVEDSDIENLVYIQAIIKETLRLYPAGPLLGHREAIEDCTVAGYNVRRGTRMLVNVWKIQRDPRVYMEPNEFRPERFITGEAKEFDVRGQNFELMPFGSGRRSCPGSSLAMQVLHLGLARFLQSFDVKTVMDMPVDMTESPGLTIPKATPLEILISPRLKEGLYV.

A helical transmembrane segment spans residues 1–21; the sequence is MDTSLFSLFVPILVFVFIALF. Position 462 (Cys-462) interacts with heme.

Belongs to the cytochrome P450 family. Requires heme as cofactor.

It localises to the membrane. It carries out the reaction xanthotoxin + reduced [NADPH--hemoprotein reductase] + O2 = 5-hydroxyxanthotoxin + oxidized [NADPH--hemoprotein reductase] + H2O + 2 H(+). The catalysed reaction is indole-3-carbonyl nitrile + reduced [NADPH--hemoprotein reductase] + O2 = 4-hydroxy-indole-3-carbonyl nitrile + oxidized [NADPH--hemoprotein reductase] + H2O + H(+). Functionally, involved in the biosynthetic pathway to 4-hydroxyindole-3-carbonyl nitrile (4-OH-ICN), a cyanogenic metabolite required for inducible pathogen defense. Converts indole-3-carbonyl nitrile (ICN) into 4-OH-ICN. Can hydroxylate xanthotoxin (8-methoxypsoralen) to form 5-hydroxyxanthotoxin (5-hydroxy-8-methoxypsoralen) in vivo and in vitro. The protein is Xanthotoxin 5-hydroxylase CYP82C2 of Arabidopsis thaliana (Mouse-ear cress).